Reading from the N-terminus, the 454-residue chain is Mogroside I-E synthase (454 aa).

Catalysis depends on histidine 18, which acts as the Proton acceptor. An anthocyanidin is bound at residue histidine 18. Catalysis depends on aspartate 111, which acts as the Charge relay. Histidine 144 lines the an anthocyanidin pocket. A disulfide bridge connects residues cysteine 259 and cysteine 331. UDP-alpha-D-glucose is bound by residues serine 278, cysteine 331, glutamine 333, tryptophan 351, asparagine 352, serine 353, and glutamate 356. Alanine 371 provides a ligand contact to an anthocyanidin. 2 residues coordinate UDP-alpha-D-glucose: aspartate 372 and glutamine 373.

The protein belongs to the UDP-glycosyltransferase family. Highly expressed in young fruits 15 days after anthesis (15-DAA).

It catalyses the reaction mogrol + UDP-alpha-D-glucose = mogroside IE + UDP + H(+). The protein operates within secondary metabolite biosynthesis; terpenoid biosynthesis. With respect to regulation, activity is increased by Mg(2+). UDP-glycosyltransferase involved in the biosynthesis of cucurbitacin and mogroside tetracyclic triterpene natural products (e.g. siamenoside I and mogrosides IV, V and VI). Cucurbitacins have cytotoxic properties and exhibit deterrent taste as a defense barrier against herbivores. Mogrosides are nonsugar highly oxygenated compounds used as high-intensity zero-calorie sweeteners; they also possess pharmacological properties such as regulating immunity, lowering blood sugar and lipid levels, protecting the liver, and acting as antioxidants and antitumor agents. Catalyzes the transfer of a glucose moiety to the C-3 hydroxyl of mogrol to form mogroside I-E. Besides mogrol, UGT74AC1 also shows activity in vitro with quercetin and naringenin as substrate. This chain is Mogroside I-E synthase, found in Siraitia grosvenorii (Monk's fruit).